Reading from the N-terminus, the 181-residue chain is Der GTPase-activating protein YihI (181 aa).

A disordered region spans residues 1–73; the sequence is MSRIKKARKP…DPRIGSKKPI (73 aa). The span at 22–32 shows a compositional bias: basic and acidic residues; sequence NRTDRDVESRE. Positions 33–42 are enriched in basic residues; the sequence is IKRKRKRKGL. Residues 55 to 67 are compositionally biased toward basic and acidic residues; it reads QARRNAQKKDPRI.

The protein belongs to the YihI family. As to quaternary structure, interacts with Der.

Functionally, a GTPase-activating protein (GAP) that modifies Der/EngA GTPase function. May play a role in ribosome biogenesis. The chain is Der GTPase-activating protein YihI from Aliivibrio fischeri (strain ATCC 700601 / ES114) (Vibrio fischeri).